A 964-amino-acid chain; its full sequence is DNA mismatch repair protein MSH2 (964 aa).

An ATP-binding site is contributed by 688–695 (GPNMGGKS). Positions 851 to 964 (DQSFGIHVAE…YLKYIKALLL (114 aa)) are interaction with MSH6.

Belongs to the DNA mismatch repair MutS family. In terms of assembly, heterodimer consisting of MSH2-MSH6 (MutS alpha) or MSH2-MSH3 (MutS beta). Both heterodimers form a ternary complex with MutL alpha (MLH1-PMS1). MutS beta also forms a ternary complex with MutL beta (MLH1-MLH3), and possibly with a MLH1-MLH2 heterodimer. Both heterodimers interact with proliferating cell nuclear antigen (PCNA/POL30). This interaction is disrupted upon binding of the MutS heterodimers to mismatch DNA. Interacts with SAW1.

It is found in the nucleus. Its activity is regulated as follows. Inhibited by Cd(2+). Functionally, component of the post-replicative DNA mismatch repair system (MMR). Forms two different heterodimers: MutS alpha (MSH2-MSH6 heterodimer) and MutS beta (MSH2-MSH3 heterodimer), which bind to DNA mismatches thereby initiating DNA repair. MSH2 seems to act as a scaffold for the other MutS homologs that provide substrate-binding and substrate specificity. When bound, heterodimers bend the DNA helix and shield approximately 20 base pairs. MutS alpha acts mainly to repair base-base and single insertion-deletion mismatches that occur during replication, but can also repair longer insertion-deletion loops (IDLs), although with decreasing efficiency as the size of the extrahelical loop increases. MutS beta acts mainly to repair IDLs from 2 to 13 nucleotides in size, but can also repair base-base and single insertion-deletion mismatches. After mismatch binding, MutS alpha or beta form a ternary complex with a MutL heterodimer, which is thought to be responsible for directing the downstream MMR events, including strand discrimination, excision, and resynthesis. ATP binding and hydrolysis play a pivotal role in mismatch repair functions. Both subunits bind ATP, but with differing affinities, and their ATPase kinetics are also very different. MSH6 binds and hydrolyzes ATP rapidly, whereas MSH2 catalyzes ATP at a substantially slower rate. Binding to a mismatched base pair suppresses MSH6-catalyzed ATP hydrolysis, but not the activity of MSH2. ATP binding to both subunits is necessary to trigger a change in MutS alpha interaction with mismatched DNA, converting MutS alpha into a sliding clamp capable of hydrolysis-independent movement along DNA, and also facilitates formation of ternary complexes containing MutS and MutL proteins and the mismatch. MutS beta also has a role in regulation of heteroduplex formation during mitotic and meiotic recombination. MutS beta binds to DNA flap structures predicted to form during recombination, and is required for 3' non-homologous tail removal (NHTR). MutS beta-binding alters the DNA conformation of its substrate at the ds/ssDNA junction and may facilitate its recognition and/or cleavage by the downstream nucleotide excision repair (NER) RAD1-RAD10 endonuclease. In Saccharomyces cerevisiae (strain ATCC 204508 / S288c) (Baker's yeast), this protein is DNA mismatch repair protein MSH2 (MSH2).